Consider the following 255-residue polypeptide: 1-(5-phosphoribosyl)-5-[(5-phosphoribosylamino)methylideneamino] imidazole-4-carboxamide isomerase (255 aa).

The active-site Proton acceptor is Asp8. The active-site Proton donor is Asp129.

This sequence belongs to the HisA/HisF family.

The protein localises to the cytoplasm. The enzyme catalyses 1-(5-phospho-beta-D-ribosyl)-5-[(5-phospho-beta-D-ribosylamino)methylideneamino]imidazole-4-carboxamide = 5-[(5-phospho-1-deoxy-D-ribulos-1-ylimino)methylamino]-1-(5-phospho-beta-D-ribosyl)imidazole-4-carboxamide. It participates in amino-acid biosynthesis; L-histidine biosynthesis; L-histidine from 5-phospho-alpha-D-ribose 1-diphosphate: step 4/9. This Prochlorococcus marinus (strain MIT 9312) protein is 1-(5-phosphoribosyl)-5-[(5-phosphoribosylamino)methylideneamino] imidazole-4-carboxamide isomerase.